Reading from the N-terminus, the 347-residue chain is Globoside alpha-1,3-N-acetylgalactosaminyltransferase 1 (347 aa).

Topologically, residues 1–6 are cytoplasmic; it reads MTRPRL. The helical; Signal-anchor for type II membrane protein transmembrane segment at 7-27 threads the bilayer; it reads AQGLAFFLLGGTGLWVLWKFI. Over 28-347 the chain is Lumenal; sequence KDWLLVSYIP…VKKNANWLRT (320 aa). The N-linked (GlcNAc...) asparagine glycan is linked to N108. Substrate contacts are provided by residues 116–121, 206–208, and 228–231; these read FAVGKY, DVD, and HPGY. Mn(2+)-binding residues include D206 and D208. E298 (nucleophile) is an active-site residue.

It belongs to the glycosyltransferase 6 family. Mn(2+) serves as cofactor.

The protein resides in the golgi apparatus membrane. The enzyme catalyses a globoside Gb4Cer (d18:1(4E)) + UDP-N-acetyl-alpha-D-galactosamine = a globoside Forssman (d18:1(4E)) + UDP + H(+). It carries out the reaction a globoside Gb4Cer + UDP-N-acetyl-alpha-D-galactosamine = a globoside IV3GalNAc-Gb4Cer + UDP + H(+). The protein operates within protein modification; protein glycosylation. In terms of biological role, catalyzes the formation of Forssman glycolipid via the addition of N-acetylgalactosamine (GalNAc) in alpha-1,3-linkage to GalNAcb-1,3Gala-1,4Galb-1,4GlcCer (Gb4Cer). Forssman glycolipid (also called Forssman antigen; FG) probably serves for adherence of some pathogens. Conversely, it diminishes Shiga toxins susceptibility. This is Globoside alpha-1,3-N-acetylgalactosaminyltransferase 1 from Mus musculus (Mouse).